Here is a 1873-residue protein sequence, read N- to C-terminus: Voltage-dependent L-type calcium channel subunit alpha-1S (1873 aa).

The segment at 1 to 23 (MEPSSPQDEGLRKKQPKKPLPEV) is disordered. Residues 1–51 (MEPSSPQDEGLRKKQPKKPLPEVLPRPPRALFCLTLQNPLRKACISIVEWK) lie on the Cytoplasmic side of the membrane. One copy of the I repeat lies at 38–337 (NPLRKACISI…LVLGVLSGEF (300 aa)). The chain crosses the membrane as a helical span at residues 52–70 (PFETIILLTIFANCVALAV). The Extracellular segment spans residues 71 to 85 (YLPMPEDDNNSLNLG). A glycan (N-linked (GlcNAc...) asparagine) is linked at N79. The chain crosses the membrane as a helical span at residues 86–106 (LEKLEYFFLTVFSIEAAMKII). Topologically, residues 107–115 (AYGFLFHQD) are cytoplasmic. Residues 116–136 (AYLRSGWNVLDFIIVFLGVFT) traverse the membrane as a helical segment. Residues 137–160 (AILEQVNVIQSNTAPMSSKGAGLD) are Extracellular-facing. The chain crosses the membrane as a helical span at residues 161 to 179 (VKALRAFRVLRPLRLVSGV). Residues 180 to 196 (PSLQVVLNSIFKAMLPL) lie on the Cytoplasmic side of the membrane. Residues 197–218 (FHIALLVLFMVIIYAIIGLELF) traverse the membrane as a helical segment. The Extracellular portion of the chain corresponds to 219–279 (KGKMHKTCYY…HGITHFDNFG (61 aa)). Intrachain disulfides connect C226-C254 and C245-C261. N257 is a glycosylation site (N-linked (GlcNAc...) asparagine). The pore-forming intramembrane region spans 280–301 (FSMLTVYQCITMEGWTDVLYWV). The Selectivity filter of repeat I signature appears at 290–293 (TMEG). E292 lines the Ca(2+) pocket. At 302–309 (NDAIGNEW) the chain is on the extracellular side. A helical membrane pass occupies residues 310 to 330 (PWIYFVTLILLGSFFILNLVL). The Cytoplasmic segment spans residues 331-432 (GVLSGEFTKE…WKCHDLVKSR (102 aa)). Residues 357–374 (QQLEEDLRGYMSWITQGE) are binding to the beta subunit. Phosphoserine is present on residues S393 and S397. The II repeat unit spans residues 418-664 (NRVFRWKCHD…VFLAIAVDNL (247 aa)). The helical transmembrane segment at 433 to 451 (VFYWLVILIVALNTLSIAS) threads the bilayer. Residues 452–462 (EHHNQPLWLTH) are Extracellular-facing. Residues 463–483 (LQDIANRVLLSLFTIEMLLKM) traverse the membrane as a helical segment. Residues 484-494 (YGLGLRQYFMS) are Cytoplasmic-facing. A helical transmembrane segment spans residues 495–514 (IFNRFDCFVVCSGILELLLV). Topologically, residues 515–523 (ESGAMTPLG) are extracellular. The chain crosses the membrane as a helical span at residues 524–542 (ISVLRCIRLLRLFKITKYW). Residues 543-561 (TSLSNLVASLLNSIRSIAS) are Cytoplasmic-facing. A helical membrane pass occupies residues 562–581 (LLLLLFLFIIIFALLGMQLF). The Extracellular segment spans residues 582 to 601 (GGRYDFEDTEVRRSNFDNFP). An intramembrane region (pore-forming) is located at residues 602–623 (QALISVFQVLTGEDWNSVMYNG). The short motif at 612–615 (TGED) is the Selectivity filter of repeat II element. E614 is a binding site for Ca(2+). The Extracellular portion of the chain corresponds to 624–633 (IMAYGGPSYP). The chain crosses the membrane as a helical span at residues 634–653 (GVLVCIYFIILFVCGNYILL). Topologically, residues 654–799 (NVFLAIAVDN…VLCHRIVNAT (146 aa)) are cytoplasmic. 2 disordered regions span residues 673–717 (AQKA…IPTT) and 731–757 (EVKD…VSPR). A Phosphoserine; by PKA modification is found at S687. The span at 690–711 (LPDKTEEEKSVMAKKLEQKPKG) shows a compositional bias: basic and acidic residues. A compositionally biased stretch (acidic residues) spans 742-751 (PGDDEEDEPE). The segment at 747 to 760 (EDEPEIPVSPRPRP) is interaction with STAC, STAC2 and STAC3 (via SH3 domains). The III repeat unit spans residues 786 to 1068 (NKVRVLCHRI…IFVGFVIVTF (283 aa)). The chain crosses the membrane as a helical span at residues 800 to 818 (WFTNFILLFILLSSAALAA). At 819-830 (EDPIRAESVRNQ) the chain is on the extracellular side. The chain crosses the membrane as a helical span at residues 831–850 (ILGYFDIAFTSVFTVEIVLK). At 851 to 866 (MTTYGAFLHKGSFCRN) the chain is on the cytoplasmic side. The helical transmembrane segment at 867-885 (YFNILDLLVVAVSLISMGL) threads the bilayer. Over 886–892 (ESSTISV) the chain is Extracellular. A helical membrane pass occupies residues 893 to 911 (VKILRVLRVLRPLRAINRA). Residues 912–930 (KGLKHVVQCVFVAIRTIGN) are Cytoplasmic-facing. A helical membrane pass occupies residues 931 to 950 (IVLVTTLLQFMFACIGVQLF). Residues 951-1000 (KGKFFSCNDLSKMTEEECRGYYYVYKDGDPTQMELRPRQWIHNDFHFDNV) lie on the Extracellular side of the membrane. A disulfide bridge connects residues C957 and C968. The interval 988-1077 (RQWIHNDFHF…FQEQGETEYK (90 aa)) is dihydropyridine binding. Positions 1001–1021 (LSAMMSLFTVSTFEGWPQLLY) form an intramembrane region, pore-forming. Positions 1012-1015 (TFEG) match the Selectivity filter of repeat III motif. Position 1014 (E1014) interacts with Ca(2+). The Extracellular portion of the chain corresponds to 1022-1038 (RAIDSNEEDMGPVYNNR). A helical transmembrane segment spans residues 1039 to 1060 (VEMAIFFIIYIILIAFFMMNIF). Over 1061 to 1118 (VGFVIVTFQEQGETEYKNCELDKNQRQCVQYALKARPLRCYIPKNPYQYQVWYVVTSS) the chain is Cytoplasmic. The stretch at 1105–1384 (NPYQYQVWYV…LFVAVIMDNF (280 aa)) is one IV repeat. Residues 1119-1140 (YFEYLMFALIMLNTICLGMQHY) form a helical membrane-spanning segment. Residues 1141–1148 (HQSEEMNH) are Extracellular-facing. The helical transmembrane segment at 1149-1170 (ISDILNVAFTIIFTLEMILKLL) threads the bilayer. Residues 1171 to 1180 (AFKARGYFGD) lie on the Cytoplasmic side of the membrane. The helical transmembrane segment at 1181 to 1200 (PWNVFDFLIVIGSIIDVILS) threads the bilayer. Residues 1201–1231 (EIDTFLASSGGLYCLGGGCGNVDPDESARIS) lie on the Extracellular side of the membrane. A helical transmembrane segment spans residues 1232-1250 (SAFFRLFRVMRLIKLLSRA). Topologically, residues 1251–1268 (EGVRTLLWTFIKSFQALP) are cytoplasmic. Residues 1269-1289 (YVALLIVMLFFIYAVIGMQMF) form a helical membrane-spanning segment. Topologically, residues 1290-1311 (GKIALVDGTQINRNNNFQTFPQ) are extracellular. Positions 1312-1330 (AVLLLFRCATGEAWQEILL) form an intramembrane region, pore-forming. The Selectivity filter of repeat IV motif lies at 1321–1324 (TGEA). The Extracellular segment spans residues 1331-1356 (ACSYGKLCDPESDYAPGEEYTCGTNF). Residues 1337–1403 (LCDPESDYAP…LGPHHLDEFK (67 aa)) form a dihydropyridine binding region. Cysteines 1338 and 1352 form a disulfide. Residues 1349–1391 (EYTCGTNFAYYYFISFYMLCAFLIINLFVAVIMDNFDYLTRDW) form a phenylalkylamine binding region. A helical membrane pass occupies residues 1357 to 1381 (AYYYFISFYMLCAFLIINLFVAVIM). Topologically, residues 1382-1873 (DNFDYLTRDW…SQETLIPPRP (492 aa)) are cytoplasmic. The interval 1522-1542 (KFYATFLIQEHFRKFMKRQEE) is interaction with calmodulin. S1575 is subject to Phosphoserine; by PKA and CAMK2. At T1579 the chain carries Phosphothreonine; by CK2. S1617 is subject to Phosphoserine; by PKA. Disordered stretches follow at residues 1689-1782 (EFPG…RPAP) and 1841-1873 (GMAS…PPRP). A compositionally biased stretch (low complexity) spans 1847–1858 (GSLSRRSSLGSL).

This sequence belongs to the calcium channel alpha-1 subunit (TC 1.A.1.11) family. CACNA1S subfamily. Component of a calcium channel complex consisting of a pore-forming alpha subunit (CACNA1S) and the ancillary subunits CACNB1 or CACNB2, CACNG1 and CACNA2D1. The channel complex contains alpha, beta, gamma and delta subunits in a 1:1:1:1 ratio, i.e. it contains either CACNB1 or CACNB2. CACNA1S channel activity is modulated by the auxiliary subunits (CACNB1 or CACNB2, CACNG1 and CACNA2D1). Interacts with DYSF and JSRP1. Interacts with RYR1. Interacts with STAC, STAC2 and STAC3 (via their SH3 domains). Interaction with STAC3 promotes expression at the cell membrane. Interaction with STAC2 promotes expression at the cell membrane, but with much lower efficiency than STAC3. Interaction with STAC1 leads to very low levels expression at the cell membrane, much less than the levels observed upon interaction with STAC3 and STAC2. Interacts with CALM. The alpha-1S subunit is found in two isoforms in the skeletal muscle: a minor form of 212 kDa containing the complete amino acid sequence, and a major form of 190 kDa derived from the full-length form by post-translational proteolysis close to Phe-1690. In terms of processing, phosphorylated. Phosphorylation by PKA activates the calcium channel. Both the minor and major forms are phosphorylated in vitro by PKA. Phosphorylation at Ser-1575 is involved in beta-adrenergic-mediated regulation of the channel. As to expression, detected in skeletal muscle T-tubules (at protein level).

The protein resides in the cell membrane. The protein localises to the sarcolemma. It localises to the T-tubule. The catalysed reaction is Ca(2+)(in) = Ca(2+)(out). Its activity is regulated as follows. Channel activity is blocked by dihydropyridines (DHP), phenylalkylamines, and by benzothiazepines. Its function is as follows. Pore-forming, alpha-1S subunit of the voltage-gated calcium channel that gives rise to L-type calcium currents in skeletal muscle. Calcium channels containing the alpha-1S subunit play an important role in excitation-contraction coupling in skeletal muscle via their interaction with RYR1, which triggers Ca(2+) release from the sarcplasmic reticulum and ultimately results in muscle contraction. Long-lasting (L-type) calcium channels belong to the 'high-voltage activated' (HVA) group. This is Voltage-dependent L-type calcium channel subunit alpha-1S (CACNA1S) from Oryctolagus cuniculus (Rabbit).